We begin with the raw amino-acid sequence, 160 residues long: G-protein-signaling modulator 3 (160 aa).

Residues 1–55 are disordered; that stretch reads MEAERPQEEEDGEQGPPQDEEGWPPPNSTTRPWRSAPPSPPPPGTRHTALGPRSA. Residues 7-22 show a composition bias toward acidic residues; it reads QEEEDGEQGPPQDEEG. Phosphoserine occurs at positions 35, 39, 56, and 59. Residues 35–44 are compositionally biased toward pro residues; it reads SAPPSPPPPG. Phosphothreonine is present on T62. 3 consecutive GoLoco domains span residues 62 to 84, 104 to 126, and 132 to 155; these read TELL…RATF, REQL…RSEP, and GQEL…RSRP.

Expressed in heart, placenta, lung and liver.

The protein resides in the cytoplasm. Interacts with subunit of G(i) alpha proteins and regulates the activation of G(i) alpha proteins. This is G-protein-signaling modulator 3 (GPSM3) from Homo sapiens (Human).